A 551-amino-acid polypeptide reads, in one-letter code: Glutamate--tRNA ligase (551 aa).

Positions 100 to 110 (PNPNGPPTLGS) match the 'HIGH' region motif.

The protein belongs to the class-I aminoacyl-tRNA synthetase family. Glutamate--tRNA ligase type 2 subfamily.

It localises to the cytoplasm. It carries out the reaction tRNA(Glu) + L-glutamate + ATP = L-glutamyl-tRNA(Glu) + AMP + diphosphate. Functionally, catalyzes the attachment of glutamate to tRNA(Glu) in a two-step reaction: glutamate is first activated by ATP to form Glu-AMP and then transferred to the acceptor end of tRNA(Glu). This chain is Glutamate--tRNA ligase, found in Archaeoglobus fulgidus (strain ATCC 49558 / DSM 4304 / JCM 9628 / NBRC 100126 / VC-16).